The primary structure comprises 70 residues: Conotoxin Vc6.10 (70 aa).

A signal peptide spans 1–19; it reads MEKLTILLLVAAVLTSTQA. A propeptide spanning residues 20 to 40 is cleaved from the precursor; sequence LIQGGADERQKAKINFLSRSD. 3 disulfide bridges follow: Cys-43/Cys-57, Cys-50/Cys-62, and Cys-56/Cys-69.

It belongs to the conotoxin O2 superfamily. Expressed by the venom duct.

It localises to the secreted. Functionally, inhibits voltage-gated ion channels. This is Conotoxin Vc6.10 from Conus victoriae (Queen Victoria cone).